The chain runs to 608 residues: Threonine--tRNA ligase (608 aa).

An editing domain region spans residues 1–144 (MRILLIHSDY…SRTITAEEEE (144 aa)). The catalytic stretch occupies residues 195 to 489 (PHVKLMREKE…ELDEKAPMLP (295 aa)). Residues Cys-286, His-338, and His-459 each contribute to the Zn(2+) site.

This sequence belongs to the class-II aminoacyl-tRNA synthetase family. In terms of assembly, homodimer. Zn(2+) serves as cofactor.

The protein resides in the cytoplasm. The catalysed reaction is tRNA(Thr) + L-threonine + ATP = L-threonyl-tRNA(Thr) + AMP + diphosphate + H(+). Catalyzes the attachment of threonine to tRNA(Thr) in a two-step reaction: L-threonine is first activated by ATP to form Thr-AMP and then transferred to the acceptor end of tRNA(Thr). Also edits incorrectly charged L-seryl-tRNA(Thr). The sequence is that of Threonine--tRNA ligase from Methanobrevibacter smithii (strain ATCC 35061 / DSM 861 / OCM 144 / PS).